The following is an 89-amino-acid chain: Large ribosomal subunit protein bL28 (89 aa).

The protein belongs to the bacterial ribosomal protein bL28 family.

This is Large ribosomal subunit protein bL28 from Chlamydia pneumoniae (Chlamydophila pneumoniae).